The sequence spans 450 residues: UDP-N-acetylmuramoylalanine--D-glutamate ligase (450 aa).

Residue 112–118 coordinates ATP; sequence GSNGKTT.

The protein belongs to the MurCDEF family.

The protein resides in the cytoplasm. The enzyme catalyses UDP-N-acetyl-alpha-D-muramoyl-L-alanine + D-glutamate + ATP = UDP-N-acetyl-alpha-D-muramoyl-L-alanyl-D-glutamate + ADP + phosphate + H(+). Its pathway is cell wall biogenesis; peptidoglycan biosynthesis. Functionally, cell wall formation. Catalyzes the addition of glutamate to the nucleotide precursor UDP-N-acetylmuramoyl-L-alanine (UMA). This Cytophaga hutchinsonii (strain ATCC 33406 / DSM 1761 / CIP 103989 / NBRC 15051 / NCIMB 9469 / D465) protein is UDP-N-acetylmuramoylalanine--D-glutamate ligase.